The sequence spans 335 residues: ATP-dependent 6-phosphofructokinase (335 aa).

Position 11 (Gly11) interacts with ATP. 21 to 25 (RAVVR) contributes to the ADP binding site. ATP is bound by residues 72–73 (RY) and 102–105 (GDGS). Mg(2+) is bound at residue Asp103. 125–127 (TID) is a binding site for substrate. Asp127 serves as the catalytic Proton acceptor. Arg154 contacts ADP. Residues Arg162 and 169–171 (MGR) each bind substrate. ADP contacts are provided by residues 185-187 (GAD) and 213-215 (KKH). Residues Glu222, Arg244, and 250–253 (HIQR) each bind substrate.

It belongs to the phosphofructokinase type A (PFKA) family. ATP-dependent PFK group I subfamily. Prokaryotic clade 'B1' sub-subfamily. As to quaternary structure, homotetramer. The cofactor is Mg(2+).

The protein localises to the cytoplasm. The catalysed reaction is beta-D-fructose 6-phosphate + ATP = beta-D-fructose 1,6-bisphosphate + ADP + H(+). It participates in carbohydrate degradation; glycolysis; D-glyceraldehyde 3-phosphate and glycerone phosphate from D-glucose: step 3/4. Allosterically activated by ADP and other diphosphonucleosides, and allosterically inhibited by phosphoenolpyruvate. Functionally, catalyzes the phosphorylation of D-fructose 6-phosphate to fructose 1,6-bisphosphate by ATP, the first committing step of glycolysis. The protein is ATP-dependent 6-phosphofructokinase of Streptococcus pneumoniae (strain ATCC BAA-255 / R6).